A 100-amino-acid chain; its full sequence is Conantokin-G (100 aa).

A signal peptide spans 1 to 21 (MHLYTYLYLLVPLVTFHLILG). Residues 22 to 80 (TGTLDDGGALTERRSADATALKAEPVLLQKSAARSTDDNGKDRLTQMKRILKQRGNKAR) constitute a propeptide that is removed on maturation. A disordered region spans residues 52 to 100 (SAARSTDDNGKDRLTQMKRILKQRGNKARGEEELQENQELIREKSNGKR). Basic and acidic residues predominate over residues 56-66 (STDDNGKDRLT). Residues 61–80 (GKDRLTQMKRILKQRGNKAR) form a gamma-carboxylation recognition sequence that plays a role in the conversion of Glu to carboxy-Glu (Gla) region. E83 contributes to the a divalent metal cation binding site. E83, E84, E87, E90, and E94 each carry 4-carboxyglutamate. Positions 87, 90, and 94 each coordinate a divalent metal cation. Residues 90–100 (ELIREKSNGKR) show a composition bias toward basic and acidic residues. N97 carries the asparagine amide modification.

The protein belongs to the conotoxin B superfamily. It depends on Ca(2+) as a cofactor. The cofactor is Mg(2+). As to expression, expressed by the venom duct.

It is found in the secreted. Functionally, conantokins inhibit N-methyl-D-aspartate (NMDA) receptors. This toxin is selective for the NR2B/GRIN2B subunit. Induces sleep-like symptoms in young mice and hyperactivity in older mice. In Conus geographus (Geography cone), this protein is Conantokin-G.